The following is a 517-amino-acid chain: Methylmalonyl-CoA decarboxylase subunit alpha (517 aa).

The region spanning 4–260 (AAKKIQDLQK…NNMEKAPEFG (257 aa)) is the CoA carboxyltransferase N-terminal domain. The CoA carboxyltransferase C-terminal domain occupies 271-513 (ELDALMPDNP…REKLPAKKHG (243 aa)).

Belongs to the AccD/PCCB family. The methylmalonyl-CoA decarboxylase is composed of four subunits: the carboxyltransferase alpha subunit (MmdA), the tunnel beta subunit (MmdB), the biotin-containing gamma subunit (MmdC) and the delta subunit (MmdD).

The protein localises to the cell membrane. The catalysed reaction is (S)-methylmalonyl-CoA + Na(+)(in) + H(+)(out) = propanoyl-CoA + Na(+)(out) + CO2. Its function is as follows. Carboxyltransferase subunit of the sodium ion pump methylmalonyl-CoA decarboxylase, which converts the chemical energy of a decarboxylation reaction into an electrochemical gradient of Na(+) ions across the cytoplasmic membrane, thereby creating a sodium ion motive force that is used for ATP synthesis. The alpha subunit catalyzes the Na(+)-independent carboxyltransfer from methylmalonyl-CoA to the prosthetic biotin group located on the gamma subunit. This is Methylmalonyl-CoA decarboxylase subunit alpha from Propionigenium modestum.